A 305-amino-acid chain; its full sequence is Nuclear egress protein 1 (305 aa).

The segment covering 1–11 has biased composition (basic and acidic residues); that stretch reads MDRERPRKTRE. Residues 1–24 form a disordered region; sequence MDRERPRKTREPASPGSVLSKRSK. The segment at 104-230 adopts a CCCH-type zinc-finger fold; the sequence is CLVLSPLGHA…FALFKTDDLH (127 aa).

The protein belongs to the herpesviridae NEC1 protein family. In terms of assembly, forms a heterohexameric complex with NEC2. Interacts with capsid vertex specific component 2/CVC2; this interaction directs the capsid to the host inner nuclear membrane to initiate budding. Phosphorylated at serine residues in the N-terminus. This phosphorylation regulates the localization within the inner nuclear membrane.

The protein resides in the host nucleus inner membrane. In terms of biological role, plays an essential role in virion nuclear egress, the first step of virion release from infected cell. Within the host nucleus, NEC1 interacts with the newly formed capsid through the vertexes and directs it to the inner nuclear membrane by associating with NEC2. Induces the budding of the capsid at the inner nuclear membrane as well as its envelopment into the perinuclear space. There, the NEC1/NEC2 complex promotes the fusion of the enveloped capsid with the outer nuclear membrane and the subsequent release of the viral capsid into the cytoplasm where it will reach the secondary budding sites in the host Golgi or trans-Golgi network. The chain is Nuclear egress protein 1 from Equus caballus (Horse).